Reading from the N-terminus, the 352-residue chain is Nicotinate-nucleotide--dimethylbenzimidazole phosphoribosyltransferase (352 aa).

E316 serves as the catalytic Proton acceptor.

This sequence belongs to the CobT family.

It catalyses the reaction 5,6-dimethylbenzimidazole + nicotinate beta-D-ribonucleotide = alpha-ribazole 5'-phosphate + nicotinate + H(+). It functions in the pathway nucleoside biosynthesis; alpha-ribazole biosynthesis; alpha-ribazole from 5,6-dimethylbenzimidazole: step 1/2. Functionally, catalyzes the synthesis of alpha-ribazole-5'-phosphate from nicotinate mononucleotide (NAMN) and 5,6-dimethylbenzimidazole (DMB). The polypeptide is Nicotinate-nucleotide--dimethylbenzimidazole phosphoribosyltransferase (Clostridium acetobutylicum (strain ATCC 824 / DSM 792 / JCM 1419 / IAM 19013 / LMG 5710 / NBRC 13948 / NRRL B-527 / VKM B-1787 / 2291 / W)).